We begin with the raw amino-acid sequence, 596 residues long: Probable tripeptidyl-peptidase SED2 (596 aa).

The first 16 residues, Met-1–Ala-16, serve as a signal peptide directing secretion. Positions Lys-17–Ala-203 are cleaved as a propeptide — removed in mature form. A Peptidase S53 domain is found at Leu-210–Pro-596. Asn-265 carries N-linked (GlcNAc...) asparagine glycosylation. Residues Glu-286 and Asp-290 each act as charge relay system in the active site. The N-linked (GlcNAc...) asparagine glycan is linked to Asn-403. Ser-501 serves as the catalytic Charge relay system. Positions 543 and 544 each coordinate Ca(2+). Asn-572 is a glycosylation site (N-linked (GlcNAc...) asparagine). Ca(2+) contacts are provided by Gly-576 and Asp-578.

It depends on Ca(2+) as a cofactor.

The protein localises to the secreted. The protein resides in the extracellular space. The catalysed reaction is Release of an N-terminal tripeptide from a polypeptide.. Secreted tripeptidyl-peptidase which degrades proteins at acidic pHs and is involved in virulence. The protein is Probable tripeptidyl-peptidase SED2 (SED2) of Arthroderma benhamiae (strain ATCC MYA-4681 / CBS 112371) (Trichophyton mentagrophytes).